We begin with the raw amino-acid sequence, 535 residues long: Cytochrome P450 monooxygenase claP (535 aa).

A run of 2 helical transmembrane segments spans residues I7–G27 and Y225–T245. C472 lines the heme pocket.

Belongs to the cytochrome P450 family. It depends on heme as a cofactor.

It localises to the membrane. It participates in secondary metabolite biosynthesis; terpenoid biosynthesis. Cytochrome P450 monooxygenase; part of the gene cluster that mediates the biosynthesis of clavilactone A, a meroterpenoid that features a unique benzo-fused ten-membered carbocyclic ring unit with an alpha,beta-epoxy-gamma-lactone moiety, forming an intriguing 10/5/3 tricyclic nested skeleton. Cytochrome P450 monooxygenases claO, claP, claQ, claU, and claW are close orthologs, suggesting that a redundant function or pseudogenes are present in the cla cluster. These monoxygenases are not involved in clavilactone A biosynthesis nor its modification. ClaR, ClaS and ClaT are sufficient to produce clavilactone A. The biosynthesis begins with the prenyltransferase claS that transfers geranyl pyrophosphate (GPP) to hydroquinone to produces geranylhydroquinone. The cytochrome P450 monooxygenase claR then catalyzes the diradical coupling reaction between the intramolecular hydroquinone and allyl moieties to form the benzo-fused ten-membered carbocyclic ring unit of wigantol. Finally the cytochrome P450 monooxygenase claT exquisitely and stereoselectively assembles the alpha,beta-epoxy-gamma-lactone moiety, producing clavilactone A via arnebinol A. This is Cytochrome P450 monooxygenase claP from Ampulloclitocybe clavipes (Club foot).